We begin with the raw amino-acid sequence, 398 residues long: Gastric triacylglycerol lipase (398 aa).

The N-terminal stretch at 1 to 19 is a signal peptide; the sequence is MWLLLTMASLISVLGTTHG. N-linked (GlcNAc...) asparagine glycosylation is found at N34 and N99. The AB hydrolase-1 domain maps to 78 to 377; that stretch reads PVVFLQHGLL…PFYNHLDFIW (300 aa). The active-site Nucleophile is the S172. C246 and C255 are disulfide-bonded. N-linked (GlcNAc...) asparagine glycosylation is found at N271 and N327. Active-site charge relay system residues include D343 and H372.

Belongs to the AB hydrolase superfamily. Lipase family.

Its subcellular location is the secreted. It carries out the reaction a triacylglycerol + H2O = a diacylglycerol + a fatty acid + H(+). The enzyme catalyses 1,2,3-tri-(9Z-octadecenoyl)-glycerol + H2O = 1,2-di-(9Z-octadecenoyl)-sn-glycerol + (9Z)-octadecenoate + H(+). It catalyses the reaction 1,2,3-trioctanoylglycerol + H2O = 1,2-dioctanoyl-sn-glycerol + octanoate + H(+). Catalyzes the hydrolysis of triacylglycerols to yield free fatty acids, diacylglycerol, monoacylglycerol, and glycerol. Shows a preferential hydrolysis at the sn-3 position of triacylglycerol. In Homo sapiens (Human), this protein is Gastric triacylglycerol lipase (LIPF).